A 315-amino-acid chain; its full sequence is uncharacterized protein (315 aa).

3 helical membrane passes run 18-38, 202-222, and 244-264; these read IWFI…IISG, ILAI…LAGI, and LIYA…VIVL. The segment at 288–315 is disordered; that stretch reads VCSTGNRSSGSTDQDISTTKQQSQEAVA.

The protein localises to the membrane. This is an uncharacterized protein from Saccharomyces cerevisiae (strain ATCC 204508 / S288c) (Baker's yeast).